The following is a 202-amino-acid chain: Holliday junction branch migration complex subunit RuvA (202 aa).

A domain I region spans residues 1-63; the sequence is MIASLRGTVL…EDSMTLYGFT (63 aa). Residues 64–142 form a domain II region; it reads SQDDRDMFHV…AFAPAESADL (79 aa). A flexible linker region spans residues 143–148; that stretch reads SSAAPA. Positions 149-202 are domain III; it reads AAGPVVEDVVEALIGLGFTDKMARPVVESVVAEQPDAATPVVLRAALSQLGAKK.

This sequence belongs to the RuvA family. In terms of assembly, homotetramer. Forms an RuvA(8)-RuvB(12)-Holliday junction (HJ) complex. HJ DNA is sandwiched between 2 RuvA tetramers; dsDNA enters through RuvA and exits via RuvB. An RuvB hexamer assembles on each DNA strand where it exits the tetramer. Each RuvB hexamer is contacted by two RuvA subunits (via domain III) on 2 adjacent RuvB subunits; this complex drives branch migration. In the full resolvosome a probable DNA-RuvA(4)-RuvB(12)-RuvC(2) complex forms which resolves the HJ.

It localises to the cytoplasm. Its function is as follows. The RuvA-RuvB-RuvC complex processes Holliday junction (HJ) DNA during genetic recombination and DNA repair, while the RuvA-RuvB complex plays an important role in the rescue of blocked DNA replication forks via replication fork reversal (RFR). RuvA specifically binds to HJ cruciform DNA, conferring on it an open structure. The RuvB hexamer acts as an ATP-dependent pump, pulling dsDNA into and through the RuvAB complex. HJ branch migration allows RuvC to scan DNA until it finds its consensus sequence, where it cleaves and resolves the cruciform DNA. The polypeptide is Holliday junction branch migration complex subunit RuvA (Corynebacterium aurimucosum (strain ATCC 700975 / DSM 44827 / CIP 107346 / CN-1) (Corynebacterium nigricans)).